We begin with the raw amino-acid sequence, 384 residues long: 8-amino-7-oxononanoate synthase (384 aa).

A substrate-binding site is contributed by Arg21. 108–109 is a binding site for pyridoxal 5'-phosphate; that stretch reads GF. Residue His133 participates in substrate binding. The pyridoxal 5'-phosphate site is built by Ser179, His207, and Thr233. An N6-(pyridoxal phosphate)lysine modification is found at Lys236. Residue Thr352 participates in substrate binding.

This sequence belongs to the class-II pyridoxal-phosphate-dependent aminotransferase family. BioF subfamily. In terms of assembly, homodimer. Requires pyridoxal 5'-phosphate as cofactor.

It catalyses the reaction 6-carboxyhexanoyl-[ACP] + L-alanine + H(+) = (8S)-8-amino-7-oxononanoate + holo-[ACP] + CO2. The protein operates within cofactor biosynthesis; biotin biosynthesis. Catalyzes the decarboxylative condensation of pimeloyl-[acyl-carrier protein] and L-alanine to produce 8-amino-7-oxononanoate (AON), [acyl-carrier protein], and carbon dioxide. This is 8-amino-7-oxononanoate synthase from Citrobacter koseri (strain ATCC BAA-895 / CDC 4225-83 / SGSC4696).